The primary structure comprises 544 residues: Protein anon-37Cs (544 aa).

The protein resides in the cytoplasm. Has a non-vital function. This is Protein anon-37Cs (anon-37Cs) from Drosophila lebanonensis (Fruit fly).